The primary structure comprises 134 residues: Complexin-1 (134 aa).

2 disordered regions span residues M1–E60 and K74–E114. Positions D15–E60 are enriched in basic and acidic residues. A coiled-coil region spans residues D29 to Q64. Positions R48–Y70 are interaction with the SNARE complex.

Belongs to the complexin/synaphin family. Binds to the SNARE core complex containing SNAP25, VAMP2 and STX1A. In terms of tissue distribution, nervous system, and pancreatic islet cells. Present in many brain regions, including hippocampus and cerebellum. In the retina, present at conventional amacrine cell synapses (at protein level).

Its subcellular location is the cytoplasm. The protein resides in the cytosol. It localises to the perikaryon. It is found in the presynapse. Functionally, positively regulates a late step in exocytosis of various cytoplasmic vesicles, such as synaptic vesicles and other secretory vesicles. Organizes the SNAREs into a cross-linked zigzag topology that, when interposed between the vesicle and plasma membranes, is incompatible with fusion, thereby preventing SNAREs from releasing neurotransmitters until an action potential arrives at the synapse. Also involved in glucose-induced secretion of insulin by pancreatic beta-cells. Essential for motor behavior. This is Complexin-1 (Cplx1) from Mus musculus (Mouse).